We begin with the raw amino-acid sequence, 103 residues long: MYAVFQSGGKQHRVSEGQVVRLEKLEVATGEKVEFDSVLMVVNGEDVKIGTPVVAGGKVVAEVVAHGRGEKVRIVKFRRRKHSRKQQGHRQWFTEVKITGIQA.

It belongs to the bacterial ribosomal protein bL21 family. Part of the 50S ribosomal subunit. Contacts protein L20.

This protein binds to 23S rRNA in the presence of protein L20. This chain is Large ribosomal subunit protein bL21, found in Glaesserella parasuis serovar 5 (strain SH0165) (Haemophilus parasuis).